A 3916-amino-acid polypeptide reads, in one-letter code: Fusarin C synthetase (3916 aa).

One can recognise a Ketosynthase family 3 (KS3) domain in the interval 9–440; that stretch reads KEPIAIIGTS…GTNVHAIIEQ (432 aa). Catalysis depends on for beta-ketoacyl synthase activity residues Cys-182, His-319, and His-360. A malonyl-CoA:ACP transacylase (MAT) domain region spans residues 548 to 869; that stretch reads VFTGQGAQWP…VTRNIHDVEA (322 aa). The interval 935 to 1068 is N-terminal hotdog fold; sequence HPLLGARSVE…GQLRVEFSSL (134 aa). The interval 935 to 1228 is dehydratase (DH) domain; it reads HPLLGARSVE…GLTCTSLLRP (294 aa). The PKS/mFAS DH domain occupies 935-1231; the sequence is HPLLGARSVE…CTSLLRPGPS (297 aa). His-967 functions as the Proton acceptor; for dehydratase activity in the catalytic mechanism. The interval 1084–1231 is C-terminal hotdog fold; that stretch reads LTSVDMERFY…CTSLLRPGPS (148 aa). The active-site Proton donor; for dehydratase activity is the Asp-1141. Residues 1350 to 1584 form a C-methyltransferase (CMeT) domain region; it reads VGENLPAVVR…YMTSVMLSQA (235 aa). Residues 2092–2266 form a ketoreductase (KR) domain 1 region; that stretch reads TYLLIGFTGG…AASVMHIGMV (175 aa). Residues 2372 to 2449 enclose the Carrier 1 domain; it reads EILAVVEEEF…ELCSTVVSHL (78 aa). Ser-2409 carries the post-translational modification O-(pantetheine 4'-phosphoryl)serine. Positions 2482–2511 are disordered; the sequence is ASPTENEPFTIRNSPNSTQVTSESGVDEET. The segment covering 2486–2505 has biased composition (polar residues); sequence ENEPFTIRNSPNSTQVTSES. The condensation stretch occupies residues 2522–2806; the sequence is PLSFAQERLW…VNLLPLRLKL (285 aa). Residues 2973–3385 form an adenylation region; sequence FEKCVVNQPD…RIAGDSQIKL (413 aa). In terms of domain architecture, Carrier 2 spans 3493–3570; sequence KPLTETQERL…EMAAKIDGFT (78 aa). O-(pantetheine 4'-phosphoryl)serine is present on Ser-3530. The interval 3612-3833 is thiolester reductase (R) domain; sequence LTGATGFLGV…DFVPVDVVAA (222 aa).

The protein in the C-terminal section; belongs to the NRP synthetase family.

It participates in mycotoxin biosynthesis. In terms of biological role, fusarin C synthetase; part of the gene cluster that mediates the biosynthesis of the mycotoxin fusarin C. Within the cluster, FUS1, FUS2, FUS8 and FUS9 are sufficient for fusarin production. The roles of the other FUS members are yet undetermined. The fusarin C synthetase FUS1 is responsible for the condensation of one acetyl-coenzyme A (CoA) unit with six malonyl-CoA units and the amide linkage of the arising heptaketide and homoserine, subsequently releasing the first intermediate, prefusarin, as an alcohol with an open ring structure. The cytochrome P450 monooxygenase FUS8 participates in multiple oxidation processes at carbon C-20 and is able to use the FUS1 product as substrate, resulting in formation of 20-hydroxy-prefusarin. This reaction seems to be essential before the 2-pyrrolidone ring closure can be catalyzed by FUS2, generating 20-hydroxy-fusarin. FUS8 is able to further oxidizes carbon C-20 after ring closure, resulting in the formation of carboxy-fusarin C. As the last step, FUS9 methylates the hydroxyl group at C-21 to generate fusarin C. Fusarin C can then rearrange to epi-fusarin C, the (z)-isomers, and fusarin A and fusarin D. In Gibberella moniliformis (strain M3125 / FGSC 7600) (Maize ear and stalk rot fungus), this protein is Fusarin C synthetase.